The sequence spans 157 residues: 2-C-methyl-D-erythritol 2,4-cyclodiphosphate synthase (157 aa).

The a divalent metal cation site is built by Asp8 and His10. Residues 8-10 (DVH) and 34-35 (HS) contribute to the 4-CDP-2-C-methyl-D-erythritol 2-phosphate site. A divalent metal cation is bound at residue His42. Residues 56 to 58 (DIG), 61 to 65 (FPDTD), 132 to 135 (TTTE), Phe139, and Arg142 each bind 4-CDP-2-C-methyl-D-erythritol 2-phosphate.

It belongs to the IspF family. In terms of assembly, homotrimer. A divalent metal cation serves as cofactor.

It catalyses the reaction 4-CDP-2-C-methyl-D-erythritol 2-phosphate = 2-C-methyl-D-erythritol 2,4-cyclic diphosphate + CMP. The protein operates within isoprenoid biosynthesis; isopentenyl diphosphate biosynthesis via DXP pathway; isopentenyl diphosphate from 1-deoxy-D-xylulose 5-phosphate: step 4/6. In terms of biological role, involved in the biosynthesis of isopentenyl diphosphate (IPP) and dimethylallyl diphosphate (DMAPP), two major building blocks of isoprenoid compounds. Catalyzes the conversion of 4-diphosphocytidyl-2-C-methyl-D-erythritol 2-phosphate (CDP-ME2P) to 2-C-methyl-D-erythritol 2,4-cyclodiphosphate (ME-CPP) with a corresponding release of cytidine 5-monophosphate (CMP). This Geobacter metallireducens (strain ATCC 53774 / DSM 7210 / GS-15) protein is 2-C-methyl-D-erythritol 2,4-cyclodiphosphate synthase.